Consider the following 733-residue polypeptide: FYVE, RhoGEF and PH domain-containing protein 3 (733 aa).

3 stretches are compositionally biased toward polar residues: residues 1–11, 47–60, and 106–117; these read MELGRSSSTPQ, HSSSAPAGDSSTRE, and ETASDSRVPQDN. The tract at residues 1-134 is disordered; it reads MELGRSSSTP…GVGEEPDPKV (134 aa). Residues 118-129 show a composition bias toward acidic residues; the sequence is PQEEEDSGVGEE. Serine 124 carries the post-translational modification Phosphoserine. Residues 153–337 form the DH domain; that stretch reads KLLHIAQELL…STAADHSNAA (185 aa). The PH 1 domain maps to 366 to 465; that stretch reads ELIKEGSIQK…WIQVIQATVE (100 aa). The tract at residues 481 to 535 is disordered; sequence CSQDEEPTLSPDQPVMSTSSVEPAGVADSNGGTPGIESRKSSSKTRRDKEKPGCK. Basic and acidic residues predominate over residues 517 to 533; it reads ESRKSSSKTRRDKEKPG. The FYVE-type zinc-finger motif lies at 528–584; sequence DKEKPGCKSCGETFNSITKRRYRCKLCGEVICRKCSEFKAENSKQSRVCRECFLEEP. The Zn(2+) site is built by cysteine 534, cysteine 537, cysteine 551, cysteine 554, cysteine 559, cysteine 562, cysteine 576, and cysteine 579. Disordered stretches follow at residues 586-612 and 712-733; these read VPPSPSSETPTELKQNAEKPPSVDPRP and GDTAGDRPGASQPQAPAGTDTP. The 100-residue stretch at 612 to 711 folds into the PH 2 domain; the sequence is PSLLCGTLNL…WLKALGTAVH (100 aa). Threonine 732 carries the post-translational modification Phosphothreonine.

In terms of tissue distribution, detected in adult brain, spleen, lung and skeletal muscle. Detected in embryos from 7 dpc to 17 dpc.

The protein resides in the cytoplasm. It localises to the cytoskeleton. Its function is as follows. Promotes the formation of filopodia. May activate CDC42, a member of the Ras-like family of Rho- and Rac proteins, by exchanging bound GDP for free GTP. Plays a role in regulating the actin cytoskeleton and cell shape. The polypeptide is FYVE, RhoGEF and PH domain-containing protein 3 (Fgd3) (Mus musculus (Mouse)).